Reading from the N-terminus, the 343-residue chain is MSEIGVAVLGVGLMGADHVARIASRISGARVAVVNDQVTEKAERLAATITGCRAIADPLDAIADRDVDAVVLATPGPTHEKQLLACLEHRKPVLCEKPLTTDVETSLEVVRREAELGVRLIQVGFMRRFDDEYRALKALIDGGELGNPLVLHCVHRNPVVPGHFDSAMTVRDSLVHEVDVTRFLFDEEIVSIQIVKPTPNSLAREGLFDPQIAILRTASGRHVDVELFVTTGVAYEVRTELVAEKGSVIIGLDVGLVRKSAPGTWGGTITPSFKERFGQAYDTEIQRWVDAVRSGGTTGIYTDGPTAWDGYAATAVCEAGVQALQSGQPVAVSMVDRVSIPGA.

It belongs to the Gfo/Idh/MocA family. Homotetramer.

The catalysed reaction is myo-inositol + NAD(+) = scyllo-inosose + NADH + H(+). In terms of biological role, involved in the oxidation of myo-inositol (MI) to 2-keto-myo-inositol (2KMI or 2-inosose). This chain is Inositol 2-dehydrogenase 1, found in Mycolicibacterium vanbaalenii (strain DSM 7251 / JCM 13017 / BCRC 16820 / KCTC 9966 / NRRL B-24157 / PYR-1) (Mycobacterium vanbaalenii).